A 530-amino-acid chain; its full sequence is Inactive ubiquitin carboxyl-terminal hydrolase 17-like protein 4 (530 aa).

Positions 80 to 375 (AGLQNMGNTC…QAYVLFYIQK (296 aa)) constitute a USP domain. Residues 382–392 (SESVSRGREPR) show a composition bias toward basic and acidic residues. Disordered regions lie at residues 382-410 (SESVSRGREPRALGAEDTDRPATQGELKR) and 493-530 (NSTDQESMNTGTLASLQGRTRRSKGKNKHSKRSLLVCQ). Positions 495–510 (TDQESMNTGTLASLQG) are enriched in polar residues. Basic residues predominate over residues 511–524 (RTRRSKGKNKHSKR).

It belongs to the peptidase C19 family. USP17 subfamily.

The protein localises to the nucleus. It is found in the endoplasmic reticulum. This Homo sapiens (Human) protein is Inactive ubiquitin carboxyl-terminal hydrolase 17-like protein 4 (USP17L4).